We begin with the raw amino-acid sequence, 598 residues long: Major royal jelly protein 5 (598 aa).

A signal peptide spans 1–17 (MTTWLLLVVCLGIACQG). N-linked (GlcNAc...) asparagine glycans are attached at residues asparagine 148, asparagine 164, asparagine 181, and asparagine 324.

This sequence belongs to the major royal jelly protein family. In terms of tissue distribution, found in and secreted from the hypopharyngeal glands of the worker honey bee (at protein level); expression peaks at 8 days post eclosion. Expressed in the brains of adult worker bees peaking at 12 days post eclosion (at protein level). Expressed in the spermatheca of adult queen bees (at protein level); Expression levels are higher in mated queens than in virgin queens. Expressed in the heads of worker bees after eclosion, expression dropping with age and detectable up to 26 days of age.

The protein resides in the secreted. In terms of biological role, component of royal jelly, a substance produced in the hypopharyngeal gland containing proteins, free amino acids, fatty acids, sugars and other nutrients, which is fed to developing larvae by worker nurse bees. Major royal jelly proteins (MRJPs) are high in essential amino acids and probably have a nutritional function in larval food. All larvae are fed some royal jelly (also known as worker jelly) early in their development but it forms the principal source of nutrition for larvae destined to become queen bees. Produced in the spermatheca of adult queen bees, along with other major royal jelly proteins, where it may act as a nutrient supply for sperm stored by mated queens, or be involved in energy metabolism. The chain is Major royal jelly protein 5 from Apis mellifera (Honeybee).